A 314-amino-acid polypeptide reads, in one-letter code: MEWSEVEVHTTNEAVEPVANVLTEFGAAGVSIEDVADFLREREDKFGEIYALKREDYPEDGVIIKAYFLKTTEFVEQIPEIEQTLKNLTTFDIPLGKFQFVVNDVDDEEWATAWKKYYHPVQITDRITIVPSWESYTPSANEIIIELDPGMAFGTGTHPTTQLCIRALSDYLQPGDELIDVGTGSGVLSIASAKLGAKSILATDLDEIATRAAEENIRLNKTENIITVKQNNLLQDINKSDVDIVVANILAEVILLFPEDVYKALKPGGIFIASGIIEDKAKVVEEALKNAGLIIEKIEQQGDWVAIISKRGVE.

Residues Thr161, Gly182, Asp204, and Asn248 each contribute to the S-adenosyl-L-methionine site.

This sequence belongs to the methyltransferase superfamily. PrmA family.

It is found in the cytoplasm. The catalysed reaction is L-lysyl-[protein] + 3 S-adenosyl-L-methionine = N(6),N(6),N(6)-trimethyl-L-lysyl-[protein] + 3 S-adenosyl-L-homocysteine + 3 H(+). Functionally, methylates ribosomal protein L11. This chain is Ribosomal protein L11 methyltransferase, found in Listeria innocua serovar 6a (strain ATCC BAA-680 / CLIP 11262).